We begin with the raw amino-acid sequence, 791 residues long: Putative inactive tyrosine-protein kinase Wsck (791 aa).

The first 26 residues, 1 to 26, serve as a signal peptide directing secretion; it reads MECGSHSGHRPIPIWLSSCLVAMCLG. The Extracellular segment spans residues 27–401; sequence LPLGAAVPQE…YATFEKGQSS (375 aa). The 87-residue stretch at 39–125 folds into the WSC domain; that stretch reads AYYYVGCYTA…VGVHSYYSTI (87 aa). Residues 131–246 enclose the Fibronectin type-III domain; it reads GPHHLRISNK…ASIEATTEVG (116 aa). N-linked (GlcNAc...) asparagine glycans are attached at residues asparagine 139, asparagine 217, and asparagine 329. The helical transmembrane segment at 402-422 threads the bilayer; it reads VVALAVTCVIFGSCLLLSLIA. At 423-791 the chain is on the cytoplasmic side; the sequence is YFYLRYKTCR…PQLEAVATMG (369 aa). Positions 493-758 constitute a Protein kinase domain; the sequence is LNVNDVIGDG…DVAFGVRQLM (266 aa). 499 to 507 contributes to the ATP binding site; the sequence is IGDGRFGEI.

This sequence belongs to the protein kinase superfamily. Tyr protein kinase family.

It localises to the membrane. In terms of biological role, probably lacks tyrosine-protein kinase activity. The protein is Putative inactive tyrosine-protein kinase Wsck of Drosophila melanogaster (Fruit fly).